Here is a 626-residue protein sequence, read N- to C-terminus: DNA mismatch repair protein MutL (626 aa).

Disordered stretches follow at residues 385-413 (SGAS…PSMV) and 418-437 (LTPS…VAPD).

The protein belongs to the DNA mismatch repair MutL/HexB family.

In terms of biological role, this protein is involved in the repair of mismatches in DNA. It is required for dam-dependent methyl-directed DNA mismatch repair. May act as a 'molecular matchmaker', a protein that promotes the formation of a stable complex between two or more DNA-binding proteins in an ATP-dependent manner without itself being part of a final effector complex. The polypeptide is DNA mismatch repair protein MutL (Chlorobaculum parvum (strain DSM 263 / NCIMB 8327) (Chlorobium vibrioforme subsp. thiosulfatophilum)).